The primary structure comprises 412 residues: Multidrug resistance protein MdtG (412 aa).

10 consecutive transmembrane segments (helical) span residues 20–40, 62–82, 96–116, 119–139, 150–170, 177–197, 225–245, 260–280, 294–314, and 382–402; these read LFVAWIGCFLTGAAFSLIMPF, LVFSITFLFSAIASPFWGGLA, LGMSIVMVLMGFAQNIWQFLI, ALLGLLGGFVPNANALIATQI, TLSTGGVSGALLGPLVGGLLA, PVFFITASVLFLCFIMTLYFI, VLCLFVTTMIIQVATGSIAPI, LAFISGMIASVPGVAALMSAP, ILVAMMALSVLLLIPMALVQT, and TVFFVTAMVVLFNAGYSYWCL.

Belongs to the major facilitator superfamily. DHA1 family. MdtG (TC 2.A.1.2.20) subfamily.

It is found in the cell inner membrane. This Rahnella sp. (strain Y9602) protein is Multidrug resistance protein MdtG.